Here is a 333-residue protein sequence, read N- to C-terminus: Cap-specific mRNA (nucleoside-2'-O-)-methyltransferase (333 aa).

Tyrosine 22 is a binding site for mRNA. 8 residues coordinate S-adenosyl-L-methionine: glutamine 39, tyrosine 66, glycine 68, glycine 72, aspartate 95, arginine 97, valine 116, and aspartate 138. A binding to NPH-I region spans residues proline 169–isoleucine 249. The For methyltransferase activity role is filled by lysine 175. MRNA contacts are provided by residues arginine 177–phenylalanine 180, aspartate 182, serine 205–glutamate 207, and glutamate 233. The span at serine 305–serine 320 shows a compositional bias: basic and acidic residues. The disordered stretch occupies residues serine 305–lysine 333. Residues arginine 323–lysine 333 show a composition bias toward basic residues.

This sequence belongs to the class I-like SAM-binding methyltransferase superfamily. Poxvirus/kinetoplastid 2'-O-MTase family. As to quaternary structure, interacts with poly(A) polymerase catalytic subunit OPG063. Interacts with OPG109 and OPG123; these interactions might help linking transcription to capping and polyadenylation.

The protein resides in the virion. It catalyses the reaction a 5'-end (N(7)-methyl 5'-triphosphoguanosine)-ribonucleoside in mRNA + S-adenosyl-L-methionine = a 5'-end (N(7)-methyl 5'-triphosphoguanosine)-(2'-O-methyl-ribonucleoside) in mRNA + S-adenosyl-L-homocysteine + H(+). Functionally, displays methyltransferase, positive regulation of the poly(A) polymerase and transcription elongation activities. Involved in the modification of both mRNA ends and in intermediate and late gene positive transcription elongation. At the mRNAs 5' end, methylates the ribose 2' OH group of the first transcribed nucleotide, thereby producing a 2'-O-methylpurine cap. At the 3' end, functions as a processivity factor which stimulates the activity of the viral poly(A) polymerase OPG063 that creates mRNA's poly(A) tail. In the presence of OPG102, OPG063 does not dissociate from the RNA allowing tail elongation to around 250 adenylates. This Cynomys gunnisoni (Gunnison's prairie dog) protein is Cap-specific mRNA (nucleoside-2'-O-)-methyltransferase (OPG102).